Consider the following 983-residue polypeptide: Pro-apoptotic serine protease NMA111 (983 aa).

The disordered stretch occupies residues 1–40 (MSVPTKRRLSFDESTNKRFLNGTHSTENNTSNIEVDEDYG). Polar residues predominate over residues 22-33 (GTHSTENNTSNI). Positions 59–260 (WQETITKVVN…LPIYRPLRAL (202 aa)) are serine protease. Catalysis depends on charge relay system residues His-108, Asp-139, and Ser-222. 2 PDZ domains span residues 287–365 (RRLG…QRGG) and 867–948 (FWSG…MSFD).

This sequence belongs to the peptidase S1C family.

It is found in the nucleus. Its function is as follows. Nuclear serine protease which mediates apoptosis. The sequence is that of Pro-apoptotic serine protease NMA111 (NMA111) from Scheffersomyces stipitis (strain ATCC 58785 / CBS 6054 / NBRC 10063 / NRRL Y-11545) (Yeast).